Consider the following 896-residue polypeptide: Phosphatidate phosphatase LPIN2 (896 aa).

Residues 1–108 (MNYVGQLAGQ…LPAYLATSPI (108 aa)) form an N-LIP region. Serine 106 is subject to Phosphoserine. The interval 120–208 (TPLVKSGGDE…SSNASLKEEE (89 aa)) is disordered. Residues 152–162 (VKKKKRRRKKY) are compositionally biased toward basic residues. Residues 153 to 158 (KKKKRR) carry the Nuclear localization signal motif. Phosphoserine is present on residues serine 174, serine 186, serine 187, serine 243, and serine 303. Disordered stretches follow at residues 370–405 (AEAPSESKPAAKVDSPSKKKGVHKRSQHQGPDDIYL) and 420–459 (FPKSESEPGSRQWPESDTLSGSQSPQSVGSAAADSGTECL). The span at 387-396 (KKKGVHKRSQ) shows a compositional bias: basic residues. Polar residues predominate over residues 426 to 448 (EPGSRQWPESDTLSGSQSPQSVG). Position 566 is a phosphoserine (serine 566). Residues 569-579 (KQLPESKEGKS) show a composition bias toward basic and acidic residues. The tract at residues 569–636 (KQLPESKEGK…LSHGSTTSYK (68 aa)) is disordered. A compositionally biased stretch (acidic residues) spans 604 to 617 (SSSDEGSQELEESI). The C-LIP stretch occupies residues 635-837 (YKKSLRLSSD…RIFTVNPKGE (203 aa)). Residues 689–693 (DIDGT) carry the DXDXT motif motif. The LXXIL motif signature appears at 700-704 (LGQIL).

This sequence belongs to the lipin family. Mg(2+) is required as a cofactor. Expressed in liver, lung, kidney, placenta, spleen, thymus, lymph node, prostate, testes, small intestine, and colon.

The protein resides in the nucleus. It localises to the cytoplasm. It is found in the cytosol. The protein localises to the endoplasmic reticulum membrane. It carries out the reaction a 1,2-diacyl-sn-glycero-3-phosphate + H2O = a 1,2-diacyl-sn-glycerol + phosphate. Inhibited by N-ethylmaleimide. In terms of biological role, acts as a magnesium-dependent phosphatidate phosphatase enzyme which catalyzes the conversion of phosphatidic acid to diacylglycerol during triglyceride, phosphatidylcholine and phosphatidylethanolamine biosynthesis in the endoplasmic reticulum membrane. Plays important roles in controlling the metabolism of fatty acids at different levels. Also acts as a nuclear transcriptional coactivator for PPARGC1A to modulate lipid metabolism. The sequence is that of Phosphatidate phosphatase LPIN2 from Homo sapiens (Human).